The following is a 597-amino-acid chain: Probable serine/threonine-protein kinase DDB_G0281745 (597 aa).

Residues 49 to 61 show a composition bias toward polar residues; that stretch reads TIDNSNGKQSTTP. A disordered region spans residues 49–320; it reads TIDNSNGKQS…RNNESTATTA (272 aa). Over residues 72–97 the composition is skewed to pro residues; sequence QPPPQQSQQQPPQPLKPIPATRPVPT. The segment covering 114-140 has biased composition (polar residues); the sequence is TLPTTNSSTKYSTLPSRQFFEVSSSPG. Residues 157–168 are compositionally biased toward low complexity; it reads SLSSNQNGSNLN. Pro residues predominate over residues 208-234; the sequence is PSPPSPPLQSPQPTPQQQPPPLKPIPQ. The span at 235–264 shows a compositional bias: low complexity; that stretch reads PQQQQQQQQQQQQQQQQQQQQQQQQQQQQQ. A compositionally biased stretch (pro residues) spans 265-274; the sequence is QPPPLKPIPQ. The span at 275–301 shows a compositional bias: low complexity; the sequence is PQQSQPTQPIKSQIQIPITNTNGNTNG. Residues 334 to 585 enclose the Protein kinase domain; the sequence is KFVGNEIGSG…KVLDTIQNIY (252 aa). Residues 340–348 and K361 contribute to the ATP site; that span reads IGSGKYGSV. The Proton acceptor role is filled by D454.

It belongs to the protein kinase superfamily. TKL Ser/Thr protein kinase family.

It carries out the reaction L-seryl-[protein] + ATP = O-phospho-L-seryl-[protein] + ADP + H(+). The enzyme catalyses L-threonyl-[protein] + ATP = O-phospho-L-threonyl-[protein] + ADP + H(+). This chain is Probable serine/threonine-protein kinase DDB_G0281745, found in Dictyostelium discoideum (Social amoeba).